The following is a 129-amino-acid chain: Glycine cleavage system H protein (129 aa).

The region spanning 24–106 (SYTVGISEHA…YGDGWFFRIM (83 aa)) is the Lipoyl-binding domain. Lys-65 is modified (N6-lipoyllysine).

It belongs to the GcvH family. In terms of assembly, the glycine cleavage system is composed of four proteins: P, T, L and H. It depends on (R)-lipoate as a cofactor.

Its function is as follows. The glycine cleavage system catalyzes the degradation of glycine. The H protein shuttles the methylamine group of glycine from the P protein to the T protein. This Shewanella loihica (strain ATCC BAA-1088 / PV-4) protein is Glycine cleavage system H protein.